Reading from the N-terminus, the 78-residue chain is Probable [Fe-S]-dependent transcriptional repressor (78 aa).

4 residues coordinate iron-sulfur cluster: cysteine 56, cysteine 61, cysteine 64, and cysteine 70.

It belongs to the FeoC family.

May function as a transcriptional regulator that controls feoABC expression. In Escherichia coli O9:H4 (strain HS), this protein is Probable [Fe-S]-dependent transcriptional repressor.